Consider the following 375-residue polypeptide: Baseplate protein gp16 (375 aa).

Belongs to the skunalikevirus baseplate protein gp16 family. In terms of assembly, homotrimer.

It localises to the virion. Its function is as follows. Forms a dome thereby closing the central channel at the end of the baseplate. Changes its conformation upon activation by calcium allowing the channel to open at the bottom of the baseplate for DNA ejection. This is Baseplate protein gp16 from Lactococcus lactis (Lactococcus lactis bacteriophage SK1).